The primary structure comprises 400 residues: Protein screw (400 aa).

Residues 1-16 form the signal peptide; it reads MLNVFFLTSLFYAASA. A propeptide spanning residues 17 to 277 is cleaved from the precursor; sequence TTYVTTNNHI…RFKRDLEKRR (261 aa). Asparagine 165, asparagine 189, asparagine 201, asparagine 304, and asparagine 342 each carry an N-linked (GlcNAc...) asparagine glycan. Cystine bridges form between cysteine 300/cysteine 365, cysteine 329/cysteine 397, and cysteine 333/cysteine 399.

The protein belongs to the TGF-beta family. As to quaternary structure, heterodimers of scw/dpp are the active subunit, dpp/dpp homodimers elicit a basal response and scw/scw homodimers alone are ineffective in specifying a dorsal pattern. In terms of tissue distribution, ubiquitously expressed during early stages of embryogenesis, but the effect on development appears graded and is restricted to the dorsal side of the embryo.

The protein resides in the secreted. In terms of biological role, part of the signal that specifies dorsal cell fates in the embryo. Acts together with dpp. In Drosophila melanogaster (Fruit fly), this protein is Protein screw (scw).